Consider the following 274-residue polypeptide: MRWCLFALWVFGVATVVTAAEEPHHDAAPQTDNEVDLTEDDKRAWSSLHSGWAKRAWQDMSSAWGKRAWQDLNSAWGKRGWQDLNSAWGKRAWQDLNSAWGKRGWQDLNSAWGKRDDDEAMEKKSWQDLNSVWGKRAWQDLNSAWGKRAWQDLNSAWGKRGWNDISSVWGKRAWQDLNSAWGKRAWQDMSSAWGKRAPEKWAAFHGSWGKRSSIEPDYEEIDAVEQLVPYQQAPNEEHIDAPEKKAWSALHGTWGKRPVKPMFNNEHSATTNEA.

An N-terminal signal peptide occupies residues 1–19 (MRWCLFALWVFGVATVVTA). The propeptide occupies 20–67 (AEEPHHDAAPQTDNEVDLTEDDKRAWSSLHSGWAKRAWQDMSSAWGKR). Residue Trp76 is modified to Tryptophan amide. A propeptide spanning residues 77–91 (GKRGWQDLNSAWGKR) is cleaved from the precursor. Trp100 carries the post-translational modification Tryptophan amide. Residues 101-136 (GKRGWQDLNSAWGKRDDDEAMEKKSWQDLNSVWGKR) constitute a propeptide that is removed on maturation. Tryptophan amide is present on Trp145. The propeptide occupies 146-148 (GKR). Trp157 bears the Tryptophan amide mark. A propeptide spanning residues 158–172 (GKRGWNDISSVWGKR) is cleaved from the precursor. Trp181 bears the Tryptophan amide mark. Positions 182–274 (GKRAWQDMSS…NEHSATTNEA (93 aa)) are excised as a propeptide.

The protein localises to the secreted. Its function is as follows. Inhibits ecdysteroid biosynthesis in the prothoracic gland of fifth instar larvae, with maximum inhibition during the spinning stage. When administered to day 8 fifth instar larvae it produces a significant delay in the commencement spinning behavior. The chain is Prothoracicostatic peptide from Bombyx mori (Silk moth).